We begin with the raw amino-acid sequence, 538 residues long: MLLPLACLHGRVAQCLTSLLLLAEPLPRPRRGARARGAASTGAEAAPAAPPAKMAAELYAPASAAAADLANSNAGAAVGRKAGPRSPPSAPAPAPPPPAPAPPTLGNNHQESPGWRCCRPTLRERNALMFNNELMADVHFVVGPPGATRTVPAHKYVLAVGSSVFYAMFYGDLAEVKSEIHIPDVEPAAFLILLKYMYSDEIDLEADTVLATLYAAKKYIVPALAKACVNFLETSLEAKNACVLLSQSRLFEEPELTQRCWEVIDAQAEMALRSEGFCEIDRQTLEIIVTREALNTKEAVVFEAVLNWAEAECKRQGLPITPRNKRHVLGRALYLVRIPTMTLEEFANGAAQSDILTLEETHSIFLWYTATNKPRLDFPLTKRKGLAPQRCHRFQSSAYRSNQWRYRGRCDSIQFAVDRRVFIAGLGLYGSSSGKAEYSVKIELKRLGVVLAQNLTKFMSDGSSNTFPVWFEHPVQVEQDTFYTASAVLDGSELSYFGQEGMTEVQCGKVAFQFQCSSDSTNGTGVQGGQIPELIFYA.

Residues 1 to 17 (MLLPLACLHGRVAQCLT) form the signal peptide. Disordered stretches follow at residues 29-53 (PRRG…PPAK) and 76-115 (AAVG…SPGW). Residues 35–53 (ARGAASTGAEAAPAAPPAK) show a composition bias toward low complexity. Positions 85-103 (RSPPSAPAPAPPPPAPAPP) are enriched in pro residues. Residues 136–206 (ADVHFVVGPP…MYSDEIDLEA (71 aa)) form the BTB domain.

Expressed in lens.

The protein localises to the cytoplasm. Functionally, adapter protein for the cul3 E3 ubiquitin-protein ligase complex. Involved in late neuronal development and muscle formation. This is BTB/POZ domain-containing protein 6 from Homo sapiens (Human).